Consider the following 163-residue polypeptide: Homoaconitase small subunit (163 aa).

This sequence belongs to the LeuD family. Heterodimer of HacA and HacB.

The enzyme catalyses (2R,3S)-homoisocitrate = cis-homoaconitate + H2O. The protein operates within amino-acid biosynthesis; L-lysine biosynthesis via AAA pathway; L-alpha-aminoadipate from 2-oxoglutarate: step 3/5. Is not inhibited by lysine. Catalyzes the reversible hydration of cis-homoaconitate ((Z)-but-1-ene-1,2,4-tricarboxylate) to homoisocitrate ((1R,2S)-1-hydroxybutane-1,2,4-tricarboxylate). Can catalyze neither the dehydration of (R)-homocitrate ((2R)-2-hydroxybutane-1,2,4-tricarboxylate) into cis-homoaconitate in vitro, nor the reverse reaction. Is not active toward (S)-homocitrate, cis-aconitate or citrate as substrate. The polypeptide is Homoaconitase small subunit (hacB) (Thermus thermophilus (strain ATCC BAA-163 / DSM 7039 / HB27)).